A 458-amino-acid polypeptide reads, in one-letter code: ATP synthase subunit beta (458 aa).

Residue 148–155 (GGAGVGKT) coordinates ATP.

The protein belongs to the ATPase alpha/beta chains family. F-type ATPases have 2 components, CF(1) - the catalytic core - and CF(0) - the membrane proton channel. CF(1) has five subunits: alpha(3), beta(3), gamma(1), delta(1), epsilon(1). CF(0) has three main subunits: a(1), b(2) and c(9-12). The alpha and beta chains form an alternating ring which encloses part of the gamma chain. CF(1) is attached to CF(0) by a central stalk formed by the gamma and epsilon chains, while a peripheral stalk is formed by the delta and b chains.

It localises to the cell inner membrane. The enzyme catalyses ATP + H2O + 4 H(+)(in) = ADP + phosphate + 5 H(+)(out). Produces ATP from ADP in the presence of a proton gradient across the membrane. The catalytic sites are hosted primarily by the beta subunits. The polypeptide is ATP synthase subunit beta (Francisella tularensis subsp. holarctica (strain FTNF002-00 / FTA)).